A 227-amino-acid polypeptide reads, in one-letter code: Ribonuclease 3 (227 aa).

One can recognise an RNase III domain in the interval 4 to 133 (FEKLETLLGY…LIAAIYLDSN (130 aa)). Position 46 (Glu-46) interacts with Mg(2+). The active site involves Asp-50. The Mg(2+) site is built by Asn-119 and Glu-122. Glu-122 is an active-site residue. Residues 158–226 (DPKTALQEWA…ARCLLHRLKN (69 aa)) form the DRBM domain.

Belongs to the ribonuclease III family. In terms of assembly, homodimer. It depends on Mg(2+) as a cofactor.

Its subcellular location is the cytoplasm. The enzyme catalyses Endonucleolytic cleavage to 5'-phosphomonoester.. Digests double-stranded RNA. Involved in the processing of primary rRNA transcript to yield the immediate precursors to the large and small rRNAs (23S and 16S). Processes some mRNAs, and tRNAs when they are encoded in the rRNA operon. Processes pre-crRNA and tracrRNA of type II CRISPR loci if present in the organism. In Rickettsia typhi (strain ATCC VR-144 / Wilmington), this protein is Ribonuclease 3.